Consider the following 269-residue polypeptide: Diadenylate cyclase (269 aa).

The DAC domain maps to arginine 109–proline 266.

It belongs to the adenylate cyclase family. DacZ subfamily. It depends on Mn(2+) as a cofactor.

It catalyses the reaction 2 ATP = 3',3'-c-di-AMP + 2 diphosphate. Its function is as follows. Diadenylate cyclase that catalyzes the condensation of 2 ATP molecules into cyclic di-AMP (c-di-AMP). c-di-AMP is a second messenger for intracellular signal transduction involved in the control of important regulatory processes such as osmoregulation. Is essential for H.volcanii. Overexpression of DacZ leads to cell death, suggesting the need for tight regulation of c-di-AMP levels. Cannot use GTP as substrate. The protein is Diadenylate cyclase of Haloferax volcanii (strain ATCC 29605 / DSM 3757 / JCM 8879 / NBRC 14742 / NCIMB 2012 / VKM B-1768 / DS2) (Halobacterium volcanii).